Reading from the N-terminus, the 359-residue chain is 4-dedimethylamino-4-oxo-anhydrotetracycline transaminase OxyQ (359 aa).

Substrate is bound by residues Gly32, Lys92, and Asn155. Residues 91–92, Asn155, Tyr186, and 216–218 contribute to the pyridoxal 5'-phosphate site; these read TK and SLS. Lys219 bears the N6-(pyridoxal phosphate)lysine mark. Arg227 is a pyridoxal 5'-phosphate binding site. Substrate is bound at residue Arg341.

The protein belongs to the class-I pyridoxal-phosphate-dependent aminotransferase family. The cofactor is pyridoxal 5'-phosphate.

It participates in antibiotic biosynthesis; oxytetracycline biosynthesis. Involved in the biosynthesis of the tetracycline antibiotic, oxytetracycline. Catalyzes the conversion of 4-dedimethylamino-4-oxoanhydrotetracycline to yield 4-amino-4-de(dimethylamino)anhydrotetracycline (4-amino-ATC). The protein is 4-dedimethylamino-4-oxo-anhydrotetracycline transaminase OxyQ of Streptomyces rimosus.